A 267-amino-acid polypeptide reads, in one-letter code: Kit ligand (267 aa).

A signal peptide spans 1–25 (MKKTQTWIITCIYLQLLLFNPLVHT). Gln-26 is modified (pyrrolidone carboxylic acid). Residues 26–215 (QGICRNRVTD…SNSIEDSSLQ (190 aa)) lie on the Extracellular side of the membrane. Disulfide bonds link Cys-29–Cys-114 and Cys-68–Cys-164. Asn-90, Asn-97, Asn-145, and Asn-196 each carry an N-linked (GlcNAc...) asparagine glycan. A helical transmembrane segment spans residues 216 to 238 (WAAVALPAFFSLVIGFAFGALYW). The Cytoplasmic portion of the chain corresponds to 239-267 (KKKQPNLTRTVENRQINEEDNEISMLQEK).

It belongs to the SCF family. In terms of assembly, homodimer, non-covalently linked. Heterotetramer with KIT, binding two KIT molecules; thereby mediates KIT dimerization and subsequent activation by autophosphorylation. Post-translationally, a soluble form is produced by proteolytic processing of the extracellular domain.

The protein localises to the cytoplasm. Its subcellular location is the cytoskeleton. It localises to the cell membrane. It is found in the cell projection. The protein resides in the lamellipodium. The protein localises to the filopodium. Its subcellular location is the secreted. Ligand for the receptor-type protein-tyrosine kinase KIT. Plays an essential role in the regulation of cell survival and proliferation, hematopoiesis, stem cell maintenance, gametogenesis, mast cell development, migration and function, and in melanogenesis. KITLG/SCF binding can activate several signaling pathways. Promotes phosphorylation of PIK3R1, the regulatory subunit of phosphatidylinositol 3-kinase, and subsequent activation of the kinase AKT1. KITLG/SCF and KIT also transmit signals via GRB2 and activation of RAS, RAF1 and the MAP kinases MAPK1/ERK2 and/or MAPK3/ERK1. KITLG/SCF and KIT promote activation of STAT family members STAT1, STAT3 and STAT5. KITLG/SCF and KIT promote activation of PLCG1, leading to the production of the cellular signaling molecules diacylglycerol and inositol 1,4,5-trisphosphate. KITLG/SCF acts synergistically with other cytokines, probably interleukins. This is Kit ligand (KITLG) from Ovis aries (Sheep).